Here is a 1241-residue protein sequence, read N- to C-terminus: Nephrin (1241 aa).

The N-terminal stretch at 1–22 (MALGTTLRASLLLLGLLTEGLA) is a signal peptide. Residues 23-1055 (QLAIPASVPR…EDQLPTEPPS (1033 aa)) lie on the Extracellular side of the membrane. Ig-like C2-type domains lie at 27–130 (PASV…VILS), 143–234 (EAGT…SFTV), 242–333 (PPVI…HGIT), 340–434 (PSAI…KSLI), 440–540 (PAQK…TQLA), and 544–635 (PPTN…ETVS). N-linked (GlcNAc...) asparagine glycosylation is present at asparagine 40. Cystine bridges form between cysteine 53–cysteine 111, cysteine 160–cysteine 217, and cysteine 265–cysteine 317. N-linked (GlcNAc...) asparagine glycans are attached at residues asparagine 356 and asparagine 401. Cysteine 361 and cysteine 417 form a disulfide bridge. At serine 432 the chain carries Phosphoserine. A disulfide bridge connects residues cysteine 465 and cysteine 528. Asparagine 547, asparagine 553, asparagine 564, asparagine 577, asparagine 680, and asparagine 708 each carry an N-linked (GlcNAc...) asparagine glycan. Cysteine 567 and cysteine 623 are disulfide-bonded. Ig-like C2-type domains lie at 740–832 (PTIR…LLRL) and 838–939 (PQVE…VSIS). 2 cysteine pairs are disulfide-bonded: cysteine 761-cysteine 816 and cysteine 863-cysteine 920. A glycan (N-linked (GlcNAc...) asparagine) is linked at asparagine 908. The 96-residue stretch at 943–1038 (PPSGLKVVSL…TQLPITTPGL (96 aa)) folds into the Fibronectin type-III domain. Residues 1025 to 1057 (ADKGTQLPITTPGLHQPSGEPEDQLPTEPPSGP) are disordered. A helical membrane pass occupies residues 1056-1076 (GPSGLPLLPVLFALGGLLLLS). Residues 1077 to 1241 (NASCVGGVLW…LPFELRGHLV (165 aa)) lie on the Cytoplasmic side of the membrane. Serine 1098 bears the Phosphoserine mark. Positions 1099 to 1114 (EKTEAGSEEDRVRNEY) are enriched in basic and acidic residues. The interval 1099-1137 (EKTEAGSEEDRVRNEYEESQWTGERDTQSSTVSTTEAEP) is disordered. Threonine 1101 carries the post-translational modification Phosphothreonine. The residue at position 1105 (serine 1105) is a Phosphoserine. Residues 1160-1241 (RGFTGEDEDM…LPFELRGHLV (82 aa)) are binds to NPHS2. At tyrosine 1193 the chain carries Phosphotyrosine; by FYN.

The protein belongs to the immunoglobulin superfamily. In terms of assembly, interacts with CD2AP (via C-terminal domain). Interacts with MAGI1 (via PDZ 2 and 3 domains) forming a tripartite complex with IGSF5/JAM4. Interacts with DDN; the interaction is direct. Self-associates (via the Ig-like domains). Also interacts (via the Ig-like domains) with KIRREL1/NEPH1 and KIRREL2; the interaction with KIRREL1 is dependent on KIRREL1 glycosylation. Interacts with KIRREL3. Forms a complex with ACTN4, CASK, IQGAP1, MAGI2, SPTAN1 and SPTBN1. Interacts with NPHS2. Interacts with phosphatidylinositol 3-kinase regulatory subunit PIK3R1; the interaction is reduced by high glucose levels. In terms of processing, phosphorylated at Tyr-1193 by FYN, leading to the recruitment and activation of phospholipase C-gamma-1/PLCG1. Tyrosine phosphorylation is reduced by high glucose levels. Dephosphorylated by tensin TNS2 which leads to reduced binding of NPHN1 to PIK3R1. As to expression, specifically expressed in podocytes of kidney glomeruli.

It localises to the cell membrane. In terms of biological role, seems to play a role in the development or function of the kidney glomerular filtration barrier. Regulates glomerular vascular permeability. May anchor the podocyte slit diaphragm to the actin cytoskeleton. Plays a role in skeletal muscle formation through regulation of myoblast fusion. This chain is Nephrin (NPHS1), found in Homo sapiens (Human).